A 293-amino-acid chain; its full sequence is Ribosomal protein L11 methyltransferase (293 aa).

4 residues coordinate S-adenosyl-L-methionine: T145, G166, D188, and N230.

It belongs to the methyltransferase superfamily. PrmA family.

It localises to the cytoplasm. The catalysed reaction is L-lysyl-[protein] + 3 S-adenosyl-L-methionine = N(6),N(6),N(6)-trimethyl-L-lysyl-[protein] + 3 S-adenosyl-L-homocysteine + 3 H(+). In terms of biological role, methylates ribosomal protein L11. This chain is Ribosomal protein L11 methyltransferase, found in Shewanella putrefaciens (strain CN-32 / ATCC BAA-453).